The following is a 286-amino-acid chain: tRNA (guanine-N(7)-)-methyltransferase (286 aa).

S-adenosyl-L-methionine contacts are provided by residues Gly-91, 114–115 (EI), 158–159 (NS), and Leu-178. The active site involves Asp-181. Residue 256-258 (TEE) participates in S-adenosyl-L-methionine binding.

The protein belongs to the class I-like SAM-binding methyltransferase superfamily. TrmB family. Forms a complex with TRM82.

The protein localises to the nucleus. It catalyses the reaction guanosine(46) in tRNA + S-adenosyl-L-methionine = N(7)-methylguanosine(46) in tRNA + S-adenosyl-L-homocysteine. It participates in tRNA modification; N(7)-methylguanine-tRNA biosynthesis. Functionally, catalyzes the formation of N(7)-methylguanine at position 46 (m7G46) in tRNA. The chain is tRNA (guanine-N(7)-)-methyltransferase from Cryptococcus neoformans var. neoformans serotype D (strain B-3501A) (Filobasidiella neoformans).